We begin with the raw amino-acid sequence, 218 residues long: Small ribosomal subunit protein uS3c (218 aa).

The KH type-2 domain occupies 47–118 (VQKHMRISSG…RLNITITRIA (72 aa)).

Belongs to the universal ribosomal protein uS3 family. Part of the 30S ribosomal subunit.

Its subcellular location is the plastid. It is found in the chloroplast. This chain is Small ribosomal subunit protein uS3c (rps3), found in Amborella trichopoda.